Consider the following 195-residue polypeptide: ATP-dependent Clp protease proteolytic subunit (195 aa).

The active-site Nucleophile is the Ser-97. His-122 is an active-site residue.

The protein belongs to the peptidase S14 family. Fourteen ClpP subunits assemble into 2 heptameric rings which stack back to back to give a disk-like structure with a central cavity, resembling the structure of eukaryotic proteasomes.

The protein resides in the cytoplasm. The enzyme catalyses Hydrolysis of proteins to small peptides in the presence of ATP and magnesium. alpha-casein is the usual test substrate. In the absence of ATP, only oligopeptides shorter than five residues are hydrolyzed (such as succinyl-Leu-Tyr-|-NHMec, and Leu-Tyr-Leu-|-Tyr-Trp, in which cleavage of the -Tyr-|-Leu- and -Tyr-|-Trp bonds also occurs).. Cleaves peptides in various proteins in a process that requires ATP hydrolysis. Has a chymotrypsin-like activity. Plays a major role in the degradation of misfolded proteins. This chain is ATP-dependent Clp protease proteolytic subunit, found in Campylobacter hominis (strain ATCC BAA-381 / DSM 21671 / CCUG 45161 / LMG 19568 / NCTC 13146 / CH001A).